The primary structure comprises 120 residues: UPF0102 protein Caur_2698 (120 aa).

The protein belongs to the UPF0102 family.

The chain is UPF0102 protein Caur_2698 from Chloroflexus aurantiacus (strain ATCC 29366 / DSM 635 / J-10-fl).